The following is a 254-amino-acid chain: Triosephosphate isomerase (254 aa).

Position 9-11 (9-11 (NWK)) interacts with substrate. The active-site Electrophile is His-96. The Proton acceptor role is filled by Glu-168. Substrate is bound by residues Gly-174 and Ser-213.

It belongs to the triosephosphate isomerase family. Homodimer.

The protein resides in the cytoplasm. The catalysed reaction is D-glyceraldehyde 3-phosphate = dihydroxyacetone phosphate. The protein operates within carbohydrate biosynthesis; gluconeogenesis. It participates in carbohydrate degradation; glycolysis; D-glyceraldehyde 3-phosphate from glycerone phosphate: step 1/1. Involved in the gluconeogenesis. Catalyzes stereospecifically the conversion of dihydroxyacetone phosphate (DHAP) to D-glyceraldehyde-3-phosphate (G3P). This Buchnera aphidicola subsp. Schizaphis graminum (strain Sg) protein is Triosephosphate isomerase.